We begin with the raw amino-acid sequence, 204 residues long: Large ribosomal subunit protein eL15 (204 aa).

The tract at residues 185-204 (GGSRRAAWKRKNREHMHRKR) is disordered. A compositionally biased stretch (basic residues) spans 190–204 (AAWKRKNREHMHRKR).

It belongs to the eukaryotic ribosomal protein eL15 family.

This chain is Large ribosomal subunit protein eL15 (RpL15), found in Drosophila melanogaster (Fruit fly).